The sequence spans 870 residues: Aminopeptidase N (870 aa).

Residues Glu-121 and 261-265 each bind substrate; that span reads GAMEN. Position 297 (His-297) interacts with Zn(2+). Glu-298 functions as the Proton acceptor in the catalytic mechanism. Zn(2+)-binding residues include His-301 and Glu-320.

It belongs to the peptidase M1 family. Zn(2+) serves as cofactor.

Its subcellular location is the cell inner membrane. It carries out the reaction Release of an N-terminal amino acid, Xaa-|-Yaa- from a peptide, amide or arylamide. Xaa is preferably Ala, but may be most amino acids including Pro (slow action). When a terminal hydrophobic residue is followed by a prolyl residue, the two may be released as an intact Xaa-Pro dipeptide.. Functionally, aminopeptidase N is involved in the degradation of intracellular peptides generated by protein breakdown during normal growth as well as in response to nutrient starvation. The sequence is that of Aminopeptidase N (pepN) from Escherichia coli (strain K12).